A 523-amino-acid polypeptide reads, in one-letter code: Exodeoxyribonuclease 7 large subunit (523 aa).

The interval 502–523 (PGASPAARTRAGKAKADQGSLF) is disordered.

The protein belongs to the XseA family. As to quaternary structure, heterooligomer composed of large and small subunits.

It localises to the cytoplasm. The enzyme catalyses Exonucleolytic cleavage in either 5'- to 3'- or 3'- to 5'-direction to yield nucleoside 5'-phosphates.. Its function is as follows. Bidirectionally degrades single-stranded DNA into large acid-insoluble oligonucleotides, which are then degraded further into small acid-soluble oligonucleotides. This chain is Exodeoxyribonuclease 7 large subunit, found in Rhodospirillum centenum (strain ATCC 51521 / SW).